Reading from the N-terminus, the 155-residue chain is Fibroblast growth factor 1 (155 aa).

Residues M1–S15 constitute a propeptide that is removed on maturation. Position 33 (N33) interacts with heparin. The segment at K127–K143 is heparin-binding.

This sequence belongs to the heparin-binding growth factors family.

It is found in the secreted. The protein localises to the cytoplasm. Its subcellular location is the cell cortex. The protein resides in the cytosol. It localises to the nucleus. In terms of biological role, plays an important role in the regulation of cell survival, cell division, angiogenesis, cell differentiation and cell migration. Functions as a potent mitogen in vitro. Acts as a ligand for FGFR1 and integrins. Binds to FGFR1 in the presence of heparin leading to FGFR1 dimerization and activation via sequential autophosphorylation on tyrosine residues which act as docking sites for interacting proteins, leading to the activation of several signaling cascades. Binds to integrins. Its binding to integrins and subsequent ternary complex formation with integrins and FGFR1 are essential for FGF1 signaling. The chain is Fibroblast growth factor 1 (fgf1) from Xenopus laevis (African clawed frog).